The primary structure comprises 549 residues: Oxygen-dependent choline dehydrogenase (549 aa).

4 to 33 contributes to the FAD binding site; sequence DYIIIGSGSAGSALAHRLSEDSRNSVIVLE. The active-site Proton acceptor is H465.

It belongs to the GMC oxidoreductase family. The cofactor is FAD.

It carries out the reaction choline + A = betaine aldehyde + AH2. It catalyses the reaction betaine aldehyde + NAD(+) + H2O = glycine betaine + NADH + 2 H(+). Its pathway is amine and polyamine biosynthesis; betaine biosynthesis via choline pathway; betaine aldehyde from choline (cytochrome c reductase route): step 1/1. Involved in the biosynthesis of the osmoprotectant glycine betaine. Catalyzes the oxidation of choline to betaine aldehyde and betaine aldehyde to glycine betaine at the same rate. The chain is Oxygen-dependent choline dehydrogenase from Sinorhizobium fredii (strain NBRC 101917 / NGR234).